The primary structure comprises 430 residues: Adenylosuccinate synthetase (430 aa).

GTP contacts are provided by residues 12–18 (GDEGKGK) and 40–42 (GHT). The active-site Proton acceptor is Asp13. Residues Asp13 and Gly40 each coordinate Mg(2+). IMP contacts are provided by residues 13-16 (DEGK), 38-41 (NAGH), Thr130, Arg144, Gln224, Thr239, and Arg303. His41 serves as the catalytic Proton donor. 299–305 (VVTGRPR) serves as a coordination point for substrate. Residues Arg305, 331–333 (KLD), and 413–415 (STS) contribute to the GTP site.

It belongs to the adenylosuccinate synthetase family. Homodimer. Mg(2+) is required as a cofactor.

The protein resides in the cytoplasm. The enzyme catalyses IMP + L-aspartate + GTP = N(6)-(1,2-dicarboxyethyl)-AMP + GDP + phosphate + 2 H(+). The protein operates within purine metabolism; AMP biosynthesis via de novo pathway; AMP from IMP: step 1/2. Its function is as follows. Plays an important role in the de novo pathway of purine nucleotide biosynthesis. Catalyzes the first committed step in the biosynthesis of AMP from IMP. In Azorhizobium caulinodans (strain ATCC 43989 / DSM 5975 / JCM 20966 / LMG 6465 / NBRC 14845 / NCIMB 13405 / ORS 571), this protein is Adenylosuccinate synthetase.